Consider the following 616-residue polypeptide: Glutamine--fructose-6-phosphate aminotransferase [isomerizing] (616 aa).

Catalysis depends on Cys2, which acts as the Nucleophile; for GATase activity. In terms of domain architecture, Glutamine amidotransferase type-2 spans 2–222; the sequence is CGIIGYSGPR…QERIVALSGD (221 aa). Residues 70 to 89 are disordered; sequence TGIGHTRWATHGEPSDRNAH. 2 SIS domains span residues 289–428 and 461–606; these read IRDD…LRGF and LAHW…VDRP. Residue Lys611 is the For Fru-6P isomerization activity of the active site.

In terms of assembly, homodimer.

The protein resides in the cytoplasm. The catalysed reaction is D-fructose 6-phosphate + L-glutamine = D-glucosamine 6-phosphate + L-glutamate. Its function is as follows. Catalyzes the first step in hexosamine metabolism, converting fructose-6P into glucosamine-6P using glutamine as a nitrogen source. The chain is Glutamine--fructose-6-phosphate aminotransferase [isomerizing] from Tropheryma whipplei (strain TW08/27) (Whipple's bacillus).